The primary structure comprises 178 residues: ATP synthase subunit delta (178 aa).

This sequence belongs to the ATPase delta chain family. In terms of assembly, F-type ATPases have 2 components, F(1) - the catalytic core - and F(0) - the membrane proton channel. F(1) has five subunits: alpha(3), beta(3), gamma(1), delta(1), epsilon(1). F(0) has three main subunits: a(1), b(2) and c(10-14). The alpha and beta chains form an alternating ring which encloses part of the gamma chain. F(1) is attached to F(0) by a central stalk formed by the gamma and epsilon chains, while a peripheral stalk is formed by the delta and b chains.

It is found in the cell membrane. In terms of biological role, f(1)F(0) ATP synthase produces ATP from ADP in the presence of a proton or sodium gradient. F-type ATPases consist of two structural domains, F(1) containing the extramembraneous catalytic core and F(0) containing the membrane proton channel, linked together by a central stalk and a peripheral stalk. During catalysis, ATP synthesis in the catalytic domain of F(1) is coupled via a rotary mechanism of the central stalk subunits to proton translocation. Functionally, this protein is part of the stalk that links CF(0) to CF(1). It either transmits conformational changes from CF(0) to CF(1) or is implicated in proton conduction. In Acetivibrio thermocellus (strain ATCC 27405 / DSM 1237 / JCM 9322 / NBRC 103400 / NCIMB 10682 / NRRL B-4536 / VPI 7372) (Clostridium thermocellum), this protein is ATP synthase subunit delta.